Here is a 351-residue protein sequence, read N- to C-terminus: Heat-inducible transcription repressor HrcA (351 aa).

The protein belongs to the HrcA family.

In terms of biological role, negative regulator of class I heat shock genes (grpE-dnaK-dnaJ and groELS operons). Prevents heat-shock induction of these operons. The polypeptide is Heat-inducible transcription repressor HrcA (Acetivibrio thermocellus (strain ATCC 27405 / DSM 1237 / JCM 9322 / NBRC 103400 / NCIMB 10682 / NRRL B-4536 / VPI 7372) (Clostridium thermocellum)).